Reading from the N-terminus, the 393-residue chain is Erythronate-4-phosphate dehydrogenase (393 aa).

Substrate-binding residues include Ser57 and Thr79. Position 159 (Asp159) interacts with NAD(+). The active site involves Arg229. Position 253 (Asp253) interacts with NAD(+). Residue Glu258 is part of the active site. His275 acts as the Proton donor in catalysis. Gly278 is a binding site for NAD(+). Tyr279 serves as a coordination point for substrate.

This sequence belongs to the D-isomer specific 2-hydroxyacid dehydrogenase family. PdxB subfamily. In terms of assembly, homodimer.

It localises to the cytoplasm. The catalysed reaction is 4-phospho-D-erythronate + NAD(+) = (R)-3-hydroxy-2-oxo-4-phosphooxybutanoate + NADH + H(+). The protein operates within cofactor biosynthesis; pyridoxine 5'-phosphate biosynthesis; pyridoxine 5'-phosphate from D-erythrose 4-phosphate: step 2/5. Catalyzes the oxidation of erythronate-4-phosphate to 3-hydroxy-2-oxo-4-phosphonooxybutanoate. The polypeptide is Erythronate-4-phosphate dehydrogenase (Colwellia psychrerythraea (strain 34H / ATCC BAA-681) (Vibrio psychroerythus)).